We begin with the raw amino-acid sequence, 489 residues long: Ammonium transporter MEP3 (489 aa).

Residues 1–17 (MARGDGHLWTETYDSST) lie on the Extracellular side of the membrane. Residues 18-38 (VAFMILGAALVFFMVPGLGFL) form a helical membrane-spanning segment. Residues 39-48 (YSGLARRKSA) lie on the Cytoplasmic side of the membrane. A helical transmembrane segment spans residues 49–69 (LALIWVVIMATLVGILQWYFW). Over 70–108 (GYSLAFSKTATNNKFIGNLDSFGFRNVYGKISDDSTYPE) the chain is Extracellular. The chain crosses the membrane as a helical span at residues 109-129 (LIYAIFQMMFMCVALSIIAGA). The Cytoplasmic portion of the chain corresponds to 130–139 (TAERGKLFPH). A helical membrane pass occupies residues 140 to 160 (MVFLFVFATLVYCPITYWIWA). Residues 161–173 (PGGWAYQWGVLDW) are Extracellular-facing. Residues 174-194 (AGGGNIEILSAVAGFVYSYFL) traverse the membrane as a helical segment. At 195–209 (GRRKENLLINFRPHN) the chain is on the cytoplasmic side. Residues 210–230 (VSMVTLGTSILWFGWLLFNAA) traverse the membrane as a helical segment. The Extracellular segment spans residues 231-239 (SSLSPNMRS). Residues 240-260 (VYAFMNTCLSATTGGMTWCLL) form a helical membrane-spanning segment. Over 261–267 (DYRSEKK) the chain is Cytoplasmic. The helical transmembrane segment at 268-288 (WSTVGLCSGIICGLVAATPSS) threads the bilayer. Gly289 is a topological domain (extracellular). The chain crosses the membrane as a helical span at residues 290–310 (CITLYGSLIQGIIAGVVCNFA). The Cytoplasmic segment spans residues 311–330 (TKIKYYLKVDDSLDLLAEHG). Residues 331-351 (IAGVVGLIFNALFAADWVIGM) form a helical membrane-spanning segment. The Extracellular segment spans residues 352-372 (DGTTKHKGGWLTHNWKQMYIQ). The chain crosses the membrane as a helical span at residues 373-393 (IAYIGASAGYCAVVTAIICFV). Topologically, residues 394–489 (LGKIPGVHLR…NPKLHHAKEA (96 aa)) are cytoplasmic. Residues 448–481 (GANSASETNPTEDSQNSSLSSATVSGQNEKSNNP) show a composition bias toward polar residues. The segment at 448–489 (GANSASETNPTEDSQNSSLSSATVSGQNEKSNNPKLHHAKEA) is disordered.

This sequence belongs to the ammonia transporter channel (TC 1.A.11.2) family.

Its subcellular location is the membrane. In terms of biological role, transporter for ammonium (both charged and uncharged NH3 and NH4) to use as a nitrogen source. The affinity of MEP2 is about twenty times higher than that of MEP1. MEP3 has the lowest affinity. This Saccharomyces cerevisiae (strain ATCC 204508 / S288c) (Baker's yeast) protein is Ammonium transporter MEP3 (MEP3).